We begin with the raw amino-acid sequence, 360 residues long: Peptide chain release factor 1 (360 aa).

Position 236 is an N5-methylglutamine (Q236).

Belongs to the prokaryotic/mitochondrial release factor family. In terms of processing, methylated by PrmC. Methylation increases the termination efficiency of RF1.

The protein resides in the cytoplasm. In terms of biological role, peptide chain release factor 1 directs the termination of translation in response to the peptide chain termination codons UAG and UAA. The sequence is that of Peptide chain release factor 1 from Limosilactobacillus reuteri subsp. reuteri (strain JCM 1112) (Lactobacillus reuteri).